The sequence spans 240 residues: Ubiquinone biosynthesis O-methyltransferase (240 aa).

Residues arginine 36, glycine 60, aspartate 81, and leucine 123 each contribute to the S-adenosyl-L-methionine site.

It belongs to the methyltransferase superfamily. UbiG/COQ3 family.

The enzyme catalyses a 3-demethylubiquinol + S-adenosyl-L-methionine = a ubiquinol + S-adenosyl-L-homocysteine + H(+). It carries out the reaction a 3-(all-trans-polyprenyl)benzene-1,2-diol + S-adenosyl-L-methionine = a 2-methoxy-6-(all-trans-polyprenyl)phenol + S-adenosyl-L-homocysteine + H(+). The protein operates within cofactor biosynthesis; ubiquinone biosynthesis. In terms of biological role, O-methyltransferase that catalyzes the 2 O-methylation steps in the ubiquinone biosynthetic pathway. This Rickettsia bellii (strain OSU 85-389) protein is Ubiquinone biosynthesis O-methyltransferase.